The following is a 241-amino-acid chain: Nickel import ATP-binding protein LarO (241 aa).

In terms of domain architecture, ABC transporter spans 2 to 240 (IKLVNICYDY…QPARQAQLMT (239 aa)). 34-41 (GPNGSGKS) provides a ligand contact to ATP.

Belongs to the ABC transporter superfamily. May form an energy-coupling factor (ECF) transporter complex composed of an ATP-binding protein (A component, LarO), a transmembrane protein (T component, LarQ) and a fused possible substrate-capture protein (S component, LarMN) of unknown stoichiometry.

Its subcellular location is the cell membrane. In terms of biological role, probable ATP-binding component of the energy-coupling factor (ECF) transporter complex LarMNQO involved in nickel import. LarO is presumably responsible for energy coupling to the transport system. The chain is Nickel import ATP-binding protein LarO from Lactiplantibacillus plantarum (strain ATCC BAA-793 / NCIMB 8826 / WCFS1) (Lactobacillus plantarum).